We begin with the raw amino-acid sequence, 247 residues long: 3-deoxy-manno-octulosonate cytidylyltransferase (247 aa).

This sequence belongs to the KdsB family.

It is found in the cytoplasm. The catalysed reaction is 3-deoxy-alpha-D-manno-oct-2-ulosonate + CTP = CMP-3-deoxy-beta-D-manno-octulosonate + diphosphate. Its pathway is nucleotide-sugar biosynthesis; CMP-3-deoxy-D-manno-octulosonate biosynthesis; CMP-3-deoxy-D-manno-octulosonate from 3-deoxy-D-manno-octulosonate and CTP: step 1/1. The protein operates within bacterial outer membrane biogenesis; lipopolysaccharide biosynthesis. Functionally, activates KDO (a required 8-carbon sugar) for incorporation into bacterial lipopolysaccharide in Gram-negative bacteria. This chain is 3-deoxy-manno-octulosonate cytidylyltransferase, found in Chlorobium limicola (strain DSM 245 / NBRC 103803 / 6330).